The chain runs to 228 residues: UPF0173 metal-dependent hydrolase lmo1577 (228 aa).

It belongs to the UPF0173 family.

The protein is UPF0173 metal-dependent hydrolase lmo1577 of Listeria monocytogenes serovar 1/2a (strain ATCC BAA-679 / EGD-e).